A 364-amino-acid chain; its full sequence is Phospho-N-acetylmuramoyl-pentapeptide-transferase (364 aa).

10 helical membrane-spanning segments follow: residues 3-23 (AILF…RVAI), 51-71 (TMGG…AKLI), 80-100 (ALLL…DDFI), 116-136 (MIGL…SWLE), 154-174 (IGWI…IIAA), 185-205 (LDGL…FVNI), 229-249 (PLDL…FLWW), 256-276 (IFMG…LAIL), 281-301 (LLLI…MLQV), and 341-361 (FWII…AEWV).

It belongs to the glycosyltransferase 4 family. MraY subfamily. Mg(2+) serves as cofactor.

The protein resides in the cell membrane. It catalyses the reaction UDP-N-acetyl-alpha-D-muramoyl-L-alanyl-gamma-D-glutamyl-meso-2,6-diaminopimeloyl-D-alanyl-D-alanine + di-trans,octa-cis-undecaprenyl phosphate = di-trans,octa-cis-undecaprenyl diphospho-N-acetyl-alpha-D-muramoyl-L-alanyl-D-glutamyl-meso-2,6-diaminopimeloyl-D-alanyl-D-alanine + UMP. Its pathway is cell wall biogenesis; peptidoglycan biosynthesis. Its function is as follows. Catalyzes the initial step of the lipid cycle reactions in the biosynthesis of the cell wall peptidoglycan: transfers peptidoglycan precursor phospho-MurNAc-pentapeptide from UDP-MurNAc-pentapeptide onto the lipid carrier undecaprenyl phosphate, yielding undecaprenyl-pyrophosphoryl-MurNAc-pentapeptide, known as lipid I. This chain is Phospho-N-acetylmuramoyl-pentapeptide-transferase, found in Nocardioides sp. (strain ATCC BAA-499 / JS614).